A 70-amino-acid chain; its full sequence is MPREIKDIKDFLLKARRKDAKSVKIKKNPENVKFKVRCSRFLYTLVITDKEKAEKLKQSLPPGLQVKEVK.

Belongs to the eukaryotic ribosomal protein eL38 family.

The polypeptide is Large ribosomal subunit protein eL38 (RpL38) (Plutella xylostella (Diamondback moth)).